A 246-amino-acid chain; its full sequence is Pyridoxine 5'-phosphate synthase (246 aa).

Asn12 contacts 3-amino-2-oxopropyl phosphate. 14–15 provides a ligand contact to 1-deoxy-D-xylulose 5-phosphate; sequence DH. Arg23 is a 3-amino-2-oxopropyl phosphate binding site. His48 (proton acceptor) is an active-site residue. 1-deoxy-D-xylulose 5-phosphate contacts are provided by Arg50 and His55. The active-site Proton acceptor is Glu75. Thr105 contacts 1-deoxy-D-xylulose 5-phosphate. Residue His196 is the Proton donor of the active site. Residues Gly197 and 218–219 each bind 3-amino-2-oxopropyl phosphate; that span reads GH.

The protein belongs to the PNP synthase family. Homooctamer; tetramer of dimers.

The protein resides in the cytoplasm. The catalysed reaction is 3-amino-2-oxopropyl phosphate + 1-deoxy-D-xylulose 5-phosphate = pyridoxine 5'-phosphate + phosphate + 2 H2O + H(+). The protein operates within cofactor biosynthesis; pyridoxine 5'-phosphate biosynthesis; pyridoxine 5'-phosphate from D-erythrose 4-phosphate: step 5/5. Catalyzes the complicated ring closure reaction between the two acyclic compounds 1-deoxy-D-xylulose-5-phosphate (DXP) and 3-amino-2-oxopropyl phosphate (1-amino-acetone-3-phosphate or AAP) to form pyridoxine 5'-phosphate (PNP) and inorganic phosphate. This Nitrosococcus oceani (strain ATCC 19707 / BCRC 17464 / JCM 30415 / NCIMB 11848 / C-107) protein is Pyridoxine 5'-phosphate synthase.